The chain runs to 400 residues: Aspartate aminotransferase (400 aa).

G37, W126, and N176 together coordinate L-aspartate. K238 bears the N6-(pyridoxal phosphate)lysine mark. R367 provides a ligand contact to L-aspartate.

This sequence belongs to the class-I pyridoxal-phosphate-dependent aminotransferase family. Homodimer. Pyridoxal 5'-phosphate serves as cofactor.

It localises to the cytoplasm. It carries out the reaction L-aspartate + 2-oxoglutarate = oxaloacetate + L-glutamate. Functionally, catalyzes the reversible conversion of aspartate and 2-oxoglutarate to glutamate and oxaloacetate. Has very weak prephenate aminotransferase activity. This Musicola paradisiaca (strain Ech703) (Dickeya paradisiaca) protein is Aspartate aminotransferase.